Here is a 655-residue protein sequence, read N- to C-terminus: p-hydroxybenzoic acid efflux pump subunit AaeB (655 aa).

The next 11 helical transmembrane spans lie at Phe13–Leu33, Trp38–Pro58, Leu69–Ile89, Leu93–Val113, Trp121–Leu141, Glu152–Ile172, Leu370–Val390, Phe407–Pro427, Gln431–Val451, Leu459–Phe479, and Phe482–Leu502.

This sequence belongs to the aromatic acid exporter ArAE (TC 2.A.85) family.

It localises to the cell inner membrane. Forms an efflux pump with AaeA. Could function as a metabolic relief valve, allowing to eliminate certain compounds when they accumulate to high levels in the cell. The polypeptide is p-hydroxybenzoic acid efflux pump subunit AaeB (Enterobacter cloacae subsp. cloacae (strain ATCC 13047 / DSM 30054 / NBRC 13535 / NCTC 10005 / WDCM 00083 / NCDC 279-56)).